A 130-amino-acid chain; its full sequence is Small ribosomal subunit protein uS8 (130 aa).

The protein belongs to the universal ribosomal protein uS8 family. As to quaternary structure, part of the 30S ribosomal subunit. Contacts proteins S5 and S12.

In terms of biological role, one of the primary rRNA binding proteins, it binds directly to 16S rRNA central domain where it helps coordinate assembly of the platform of the 30S subunit. The polypeptide is Small ribosomal subunit protein uS8 (Vibrio parahaemolyticus serotype O3:K6 (strain RIMD 2210633)).